A 971-amino-acid chain; its full sequence is ATP-dependent helicase NAM7 (971 aa).

The tract at residues 1 to 22 (MVGSGSHTPYDISNSPSDVNVQ) is disordered. In terms of domain architecture, Upf1 CH-rich spans 54 to 208 (SPSASDNSCA…SKLEAKWRSN (155 aa)). Serine 56 carries the post-translational modification Phosphoserine. Zn(2+)-binding residues include cysteine 62, cysteine 65, cysteine 76, cysteine 79, cysteine 84, histidine 94, histidine 98, histidine 104, cysteine 122, cysteine 125, cysteine 148, and cysteine 152. The tract at residues 62-94 (CAYCGIDSAKCVIKCNSCKKWFCNTKNGTSSSH) is C3H. A CC/SHH/C region spans residues 76 to 104 (CNSCKKWFCNTKNGTSSSHIVNHLVLSHH). Positions 122-152 (CYNCGRKNVFLLGFVSAKSEAVVVLLCRIPC) are C4. Residues glutamine 413, 433 to 437 (GTGKT), glutamine 601, tyrosine 638, and glutamate 769 each bind ATP. Phosphoserine is present on serine 869.

It belongs to the DNA2/NAM7 helicase family.

It is found in the cytoplasm. The catalysed reaction is ATP + H2O = ADP + phosphate + H(+). RNA-dependent helicase required for nonsense-mediated decay (NMD) of aberrant mRNAs containing premature stop codons and modulates the expression level of normal mRNAs. Also capable of unwinding double-stranded DNA and translocating on single-stranded DNA. This chain is ATP-dependent helicase NAM7 (NAM7), found in Saccharomyces cerevisiae (strain ATCC 204508 / S288c) (Baker's yeast).